The following is a 94-amino-acid chain: Small ribosomal subunit protein uS19 (94 aa).

The interval 73-94 is disordered; sequence EFSPTRRFGGHADKKSKKGQVK.

Belongs to the universal ribosomal protein uS19 family.

Protein S19 forms a complex with S13 that binds strongly to the 16S ribosomal RNA. This chain is Small ribosomal subunit protein uS19, found in Kosmotoga olearia (strain ATCC BAA-1733 / DSM 21960 / TBF 19.5.1).